We begin with the raw amino-acid sequence, 183 residues long: Adenine phosphoribosyltransferase (183 aa).

This sequence belongs to the purine/pyrimidine phosphoribosyltransferase family. As to quaternary structure, homodimer.

The protein resides in the cytoplasm. It carries out the reaction AMP + diphosphate = 5-phospho-alpha-D-ribose 1-diphosphate + adenine. The protein operates within purine metabolism; AMP biosynthesis via salvage pathway; AMP from adenine: step 1/1. Its function is as follows. Catalyzes a salvage reaction resulting in the formation of AMP, that is energically less costly than de novo synthesis. In Shewanella sp. (strain MR-7), this protein is Adenine phosphoribosyltransferase.